The sequence spans 208 residues: Protein-L-isoaspartate O-methyltransferase (208 aa).

Residue serine 59 is part of the active site.

The protein belongs to the methyltransferase superfamily. L-isoaspartyl/D-aspartyl protein methyltransferase family.

The protein localises to the cytoplasm. The enzyme catalyses [protein]-L-isoaspartate + S-adenosyl-L-methionine = [protein]-L-isoaspartate alpha-methyl ester + S-adenosyl-L-homocysteine. In terms of biological role, catalyzes the methyl esterification of L-isoaspartyl residues in peptides and proteins that result from spontaneous decomposition of normal L-aspartyl and L-asparaginyl residues. It plays a role in the repair and/or degradation of damaged proteins. In Erwinia tasmaniensis (strain DSM 17950 / CFBP 7177 / CIP 109463 / NCPPB 4357 / Et1/99), this protein is Protein-L-isoaspartate O-methyltransferase.